The sequence spans 83 residues: Large ribosomal subunit protein uL23 (83 aa).

The protein belongs to the universal ribosomal protein uL23 family. Part of the 50S ribosomal subunit. Contacts protein L29.

In terms of biological role, binds to 23S rRNA. One of the proteins that surrounds the polypeptide exit tunnel on the outside of the ribosome. This Archaeoglobus fulgidus (strain ATCC 49558 / DSM 4304 / JCM 9628 / NBRC 100126 / VC-16) protein is Large ribosomal subunit protein uL23.